The chain runs to 129 residues: Phosphoribosyl-AMP cyclohydrolase (129 aa).

D86 serves as a coordination point for Mg(2+). Position 87 (C87) interacts with Zn(2+). Mg(2+) contacts are provided by D88 and D90. Residues C104 and C111 each coordinate Zn(2+).

This sequence belongs to the PRA-CH family. As to quaternary structure, homodimer. It depends on Mg(2+) as a cofactor. Zn(2+) serves as cofactor.

The protein resides in the cytoplasm. The enzyme catalyses 1-(5-phospho-beta-D-ribosyl)-5'-AMP + H2O = 1-(5-phospho-beta-D-ribosyl)-5-[(5-phospho-beta-D-ribosylamino)methylideneamino]imidazole-4-carboxamide. Its pathway is amino-acid biosynthesis; L-histidine biosynthesis; L-histidine from 5-phospho-alpha-D-ribose 1-diphosphate: step 3/9. In terms of biological role, catalyzes the hydrolysis of the adenine ring of phosphoribosyl-AMP. The sequence is that of Phosphoribosyl-AMP cyclohydrolase from Ignicoccus hospitalis (strain KIN4/I / DSM 18386 / JCM 14125).